Here is a 212-residue protein sequence, read N- to C-terminus: MNNSLIVRQLGLQDYQEIWHKMQDFTDTRNAETQDEIWLVQHYPVFTQGQAGKPEHLLQRSEIPVVQSVRGGQITYHAPGQQVMYVLIDIKRHKNLNVRQLVTALEQTVVKTLAEYGIESYPKPDAPGVYVDGKKICSLGLRIRRGCSFHGLALNINMDLNPFHYINPCGYAGLEMCQLADFVNQDKADCDNVSAKLIKHFANLLGYNITTL.

The region spanning 31 to 209 is the BPL/LPL catalytic domain; sequence AETQDEIWLV…HFANLLGYNI (179 aa). Residues 70 to 77, 138 to 140, and 151 to 153 each bind substrate; these read RGGQITYH, SLG, and GLA. C169 serves as the catalytic Acyl-thioester intermediate.

This sequence belongs to the LipB family.

Its subcellular location is the cytoplasm. It carries out the reaction octanoyl-[ACP] + L-lysyl-[protein] = N(6)-octanoyl-L-lysyl-[protein] + holo-[ACP] + H(+). It functions in the pathway protein modification; protein lipoylation via endogenous pathway; protein N(6)-(lipoyl)lysine from octanoyl-[acyl-carrier-protein]: step 1/2. In terms of biological role, catalyzes the transfer of endogenously produced octanoic acid from octanoyl-acyl-carrier-protein onto the lipoyl domains of lipoate-dependent enzymes. Lipoyl-ACP can also act as a substrate although octanoyl-ACP is likely to be the physiological substrate. The sequence is that of Octanoyltransferase from Haemophilus influenzae (strain ATCC 51907 / DSM 11121 / KW20 / Rd).